The sequence spans 280 residues: 4-diphosphocytidyl-2-C-methyl-D-erythritol kinase (280 aa).

Residue K8 is part of the active site. P91 to T101 is an ATP binding site. Residue D133 is part of the active site.

It belongs to the GHMP kinase family. IspE subfamily.

The enzyme catalyses 4-CDP-2-C-methyl-D-erythritol + ATP = 4-CDP-2-C-methyl-D-erythritol 2-phosphate + ADP + H(+). It functions in the pathway isoprenoid biosynthesis; isopentenyl diphosphate biosynthesis via DXP pathway; isopentenyl diphosphate from 1-deoxy-D-xylulose 5-phosphate: step 3/6. Its function is as follows. Catalyzes the phosphorylation of the position 2 hydroxy group of 4-diphosphocytidyl-2C-methyl-D-erythritol. The polypeptide is 4-diphosphocytidyl-2-C-methyl-D-erythritol kinase (Clostridium botulinum (strain 657 / Type Ba4)).